Reading from the N-terminus, the 172-residue chain is Shikimate kinase (172 aa).

Position 14 to 19 (14 to 19 (GAGKST)) interacts with ATP. Residue serine 18 participates in Mg(2+) binding. Positions 36, 60, and 82 each coordinate substrate. Arginine 120 lines the ATP pocket. Residue arginine 139 participates in substrate binding. Glutamine 156 serves as a coordination point for ATP.

This sequence belongs to the shikimate kinase family. In terms of assembly, monomer. The cofactor is Mg(2+).

The protein resides in the cytoplasm. It carries out the reaction shikimate + ATP = 3-phosphoshikimate + ADP + H(+). The protein operates within metabolic intermediate biosynthesis; chorismate biosynthesis; chorismate from D-erythrose 4-phosphate and phosphoenolpyruvate: step 5/7. Its function is as follows. Catalyzes the specific phosphorylation of the 3-hydroxyl group of shikimic acid using ATP as a cosubstrate. The protein is Shikimate kinase of Aliivibrio salmonicida (strain LFI1238) (Vibrio salmonicida (strain LFI1238)).